Here is a 246-residue protein sequence, read N- to C-terminus: Probable transcriptional regulatory protein WD_0484 (246 aa).

The interval methionine 1 to serine 22 is disordered.

Belongs to the TACO1 family.

The protein localises to the cytoplasm. This Wolbachia pipientis wMel protein is Probable transcriptional regulatory protein WD_0484.